We begin with the raw amino-acid sequence, 530 residues long: Ubiquitin carboxyl-terminal hydrolase 17-like protein 11 (530 aa).

The USP domain occupies 80 to 375 (AGLQNMGNTC…QAYVLFYIQK (296 aa)). Residue Cys-89 is the Nucleophile of the active site. His-334 (proton acceptor) is an active-site residue. Basic and acidic residues-rich tracts occupy residues 382-392 (SESVSRGREPR) and 398-413 (DTDR…RDHP). 2 disordered regions span residues 382-413 (SESV…RDHP) and 509-530 (RGRA…LVCQ). Positions 510–524 (GRARRSKGKNKHSKR) are enriched in basic residues.

It belongs to the peptidase C19 family. USP17 subfamily.

It localises to the nucleus. Its subcellular location is the endoplasmic reticulum. It carries out the reaction Thiol-dependent hydrolysis of ester, thioester, amide, peptide and isopeptide bonds formed by the C-terminal Gly of ubiquitin (a 76-residue protein attached to proteins as an intracellular targeting signal).. In terms of biological role, deubiquitinating enzyme that removes conjugated ubiquitin from specific proteins to regulate different cellular processes that may include cell proliferation, progression through the cell cycle, apoptosis, cell migration, and the cellular response to viral infection. This is Ubiquitin carboxyl-terminal hydrolase 17-like protein 11 (USP17L11) from Homo sapiens (Human).